Here is a 210-residue protein sequence, read N- to C-terminus: Uracil phosphoribosyltransferase (210 aa).

5-phospho-alpha-D-ribose 1-diphosphate-binding positions include Arg80, Arg105, and 132–140 (DPMLATGGS). Uracil is bound by residues Ile195 and 200 to 202 (GDA). A 5-phospho-alpha-D-ribose 1-diphosphate-binding site is contributed by Asp201.

Belongs to the UPRTase family. Mg(2+) serves as cofactor.

The catalysed reaction is UMP + diphosphate = 5-phospho-alpha-D-ribose 1-diphosphate + uracil. It functions in the pathway pyrimidine metabolism; UMP biosynthesis via salvage pathway; UMP from uracil: step 1/1. Its activity is regulated as follows. Allosterically activated by GTP. Functionally, catalyzes the conversion of uracil and 5-phospho-alpha-D-ribose 1-diphosphate (PRPP) to UMP and diphosphate. This Caldanaerobacter subterraneus subsp. tengcongensis (strain DSM 15242 / JCM 11007 / NBRC 100824 / MB4) (Thermoanaerobacter tengcongensis) protein is Uracil phosphoribosyltransferase.